Reading from the N-terminus, the 479-residue chain is 6-phosphogluconate dehydrogenase, decarboxylating (479 aa).

NADP(+) is bound by residues 9–14, 32–34, 74–76, and Asn-102; these read GLAVMG, NRT, and IQA. Residues Asn-102 and 128–130 contribute to the substrate site; that span reads SGG. The active-site Proton acceptor is Lys-182. Residue 185-186 coordinates substrate; sequence HN. The active-site Proton donor is Glu-189. Substrate-binding residues include Tyr-190, Lys-259, Arg-286, Arg-446, and His-452.

This sequence belongs to the 6-phosphogluconate dehydrogenase family. Homodimer.

The enzyme catalyses 6-phospho-D-gluconate + NADP(+) = D-ribulose 5-phosphate + CO2 + NADPH. Its pathway is carbohydrate degradation; pentose phosphate pathway; D-ribulose 5-phosphate from D-glucose 6-phosphate (oxidative stage): step 3/3. Catalyzes the oxidative decarboxylation of 6-phosphogluconate to ribulose 5-phosphate and CO(2), with concomitant reduction of NADP to NADPH. This is 6-phosphogluconate dehydrogenase, decarboxylating (gnd) from Chlamydia pneumoniae (Chlamydophila pneumoniae).